A 542-amino-acid polypeptide reads, in one-letter code: Membrane protein insertase YidC (542 aa).

Helical transmembrane passes span 7–27, 338–358, 417–437, 455–475, and 494–514; these read LLVM…QQDF, FALL…IIGV, MGGC…YWTF, LSAQ…MFLL, and FMPV…VLYW.

The protein belongs to the OXA1/ALB3/YidC family. Type 1 subfamily. As to quaternary structure, interacts with the Sec translocase complex via SecD. Specifically interacts with transmembrane segments of nascent integral membrane proteins during membrane integration.

It is found in the cell inner membrane. In terms of biological role, required for the insertion and/or proper folding and/or complex formation of integral membrane proteins into the membrane. Involved in integration of membrane proteins that insert both dependently and independently of the Sec translocase complex, as well as at least some lipoproteins. Aids folding of multispanning membrane proteins. This chain is Membrane protein insertase YidC, found in Actinobacillus pleuropneumoniae serotype 3 (strain JL03).